The following is a 72-amino-acid chain: Large ribosomal subunit protein uL29 (72 aa).

The protein belongs to the universal ribosomal protein uL29 family.

This Prochlorococcus marinus (strain MIT 9215) protein is Large ribosomal subunit protein uL29.